The chain runs to 98 residues: Integration host factor subunit alpha (98 aa).

Residues 49–71 (FGNFDLRDKNQRPGRNPKTGEDI) form a disordered region.

It belongs to the bacterial histone-like protein family. Heterodimer of an alpha and a beta chain.

Functionally, this protein is one of the two subunits of integration host factor, a specific DNA-binding protein that functions in genetic recombination as well as in transcriptional and translational control. This Pectobacterium atrosepticum (strain SCRI 1043 / ATCC BAA-672) (Erwinia carotovora subsp. atroseptica) protein is Integration host factor subunit alpha.